Reading from the N-terminus, the 407-residue chain is MSQQTEPATPLLSRSMNAVIIAQFFSAFGDNALLFATLALIKQLVYPDWSQPFLQMGFVAAYIILAPFVGQIADSFSKGQVMMFANTLKLAGALLICVGGNPFLGYTLVGVGAAAYSPAKYGILGEITRGDQLVKANGLMEASTIAAILTGSVAGGVLADWNIYGALSICAVAYGIALGANMLIPRLNAARPGQPWHPVQMASSFFSACRVLWRDGDARLSLVGTSMFWGAGVTLRFLLVLWVPHALGITDNATPTLLNAMVAVGIVVGAGAAAKLVTLDSVRRCLPAGFLIGVVVVIFTLQHNLMSAYSLLILLGALGGFFIVPLNALLQERGKASVGAGNAIAVQNLGENGAMLLMLGLYSLVVKLGVSVIAIGIGFGVLFALAIALLWVWLILAKRRDRSASAE.

A run of 11 helical transmembrane segments spans residues 18–38, 53–73, 91–111, 139–159, 163–183, 229–249, 257–277, 286–306, 310–330, 343–365, and 375–395; these read AVII…FATL, FLQM…GQIA, AGAL…LVGV, LMEA…GVLA, IYGA…ANML, WGAG…ALGI, LLNA…AKLV, LPAG…HNLM, SLLI…NALL, AIAV…YSLV, and IGIG…VWLI.

The protein belongs to the major facilitator superfamily. LplT (TC 2.A.1.42) family.

It localises to the cell inner membrane. In terms of biological role, catalyzes the facilitated diffusion of 2-acyl-glycero-3-phosphoethanolamine (2-acyl-GPE) into the cell. The polypeptide is Lysophospholipid transporter LplT (Pectobacterium carotovorum subsp. carotovorum (strain PC1)).